The chain runs to 237 residues: NAD-dependent protein deacylase (237 aa).

The region spanning M1–L235 is the Deacetylase sirtuin-type domain. G8 to W28 contributes to the NAD(+) binding site. Substrate is bound by residues Y53 and R56. Q86–D89 contacts NAD(+). The Proton acceptor role is filled by H104. Positions 112, 115, 138, and 140 each coordinate Zn(2+). NAD(+)-binding positions include G177–S179, N203–E205, and A221.

Belongs to the sirtuin family. Class III subfamily. Zn(2+) is required as a cofactor.

It is found in the cytoplasm. It carries out the reaction N(6)-acetyl-L-lysyl-[protein] + NAD(+) + H2O = 2''-O-acetyl-ADP-D-ribose + nicotinamide + L-lysyl-[protein]. The catalysed reaction is N(6)-succinyl-L-lysyl-[protein] + NAD(+) + H2O = 2''-O-succinyl-ADP-D-ribose + nicotinamide + L-lysyl-[protein]. In terms of biological role, NAD-dependent lysine deacetylase and desuccinylase that specifically removes acetyl and succinyl groups on target proteins. Modulates the activities of several proteins which are inactive in their acylated form. In Mycobacterium bovis (strain ATCC BAA-935 / AF2122/97), this protein is NAD-dependent protein deacylase.